A 284-amino-acid chain; its full sequence is L-ribulose-5-phosphate 3-epimerase UlaE (284 aa).

Belongs to the L-ribulose-5-phosphate 3-epimerase family.

The catalysed reaction is L-ribulose 5-phosphate = L-xylulose 5-phosphate. It participates in cofactor degradation; L-ascorbate degradation; D-xylulose 5-phosphate from L-ascorbate: step 3/4. Functionally, catalyzes the isomerization of L-xylulose-5-phosphate to L-ribulose-5-phosphate. Is involved in the anaerobic L-ascorbate utilization. The polypeptide is L-ribulose-5-phosphate 3-epimerase UlaE (Escherichia coli O17:K52:H18 (strain UMN026 / ExPEC)).